A 476-amino-acid polypeptide reads, in one-letter code: Surface membrane glycoprotein GP46/M-2 (476 aa).

A signal peptide spans 1–32 (MAQCVRRLVLAAPLAAVVALLLCTSSAPVARA). 4 repeat units span residues 107 to 130 (VMILALDFGAMGQGLSGTLPPSWS), 131 to 154 (SMKHLIVLDLEGTKVSGTLPPEWS), 155 to 178 (EMTSAEALQLENCGLSGSLPTSWS), and 179 to 202 (SMPKLRIVSLSGNHFCGCVPDSWR). A 4 X 24 AA tandem repeats region spans residues 107 to 202 (VMILALDFGA…FCGCVPDSWR (96 aa)). Disordered regions lie at residues 231–255 (APGTTTTNPPTTTGTPAASSTPSPG) and 348–370 (ALSPPPADGETDSHTRTRTRRRA). Residue Cys-452 is the site of GPI-anchor amidated cysteine attachment. Residues 453 to 476 (PALFDGARLRCCALVVCAGAAPAG) constitute a propeptide, removed in mature form.

It is found in the cell membrane. This Leishmania amazonensis protein is Surface membrane glycoprotein GP46/M-2.